The chain runs to 540 residues: 2,3-bisphosphoglycerate-independent phosphoglycerate mutase (540 aa).

2 residues coordinate Mn(2+): Asp24 and Ser74. Ser74 serves as the catalytic Phosphoserine intermediate. Substrate contacts are provided by residues His135, 165 to 166 (RD), Arg197, Arg203, 268 to 271 (RPDR), and Lys341. Residues Asp408, His412, Asp449, His450, and His467 each contribute to the Mn(2+) site.

It belongs to the BPG-independent phosphoglycerate mutase family. In terms of assembly, monomer. Mn(2+) serves as cofactor.

It catalyses the reaction (2R)-2-phosphoglycerate = (2R)-3-phosphoglycerate. It participates in carbohydrate degradation; glycolysis; pyruvate from D-glyceraldehyde 3-phosphate: step 3/5. In terms of biological role, catalyzes the interconversion of 2-phosphoglycerate and 3-phosphoglycerate. The sequence is that of 2,3-bisphosphoglycerate-independent phosphoglycerate mutase from Prochlorococcus marinus (strain SARG / CCMP1375 / SS120).